A 214-amino-acid chain; its full sequence is Phosphatidylcholine transfer protein (214 aa).

M1 is modified (N-acetylmethionine). In terms of domain architecture, START spans 1–212 (MAGAACCFSD…MVKACQNYHK (212 aa)). The a 1,2-diacyl-sn-glycero-3-phosphocholine site is built by Y72 and R78. S139 carries the post-translational modification Phosphoserine. Q157 is a binding site for a 1,2-diacyl-sn-glycero-3-phosphocholine.

In terms of assembly, interacts with ACOT13/THEM2. Abundant in liver of pups but levels in liver decrease 10-fold about 2 weeks after birth. In adult, highly expressed in epididymis, testis, kidney and bone-marrow derived mast cells.

The protein localises to the cytoplasm. In terms of biological role, catalyzes the transfer of phosphatidylcholine between membranes. Binds a single lipid molecule. The polypeptide is Phosphatidylcholine transfer protein (Pctp) (Mus musculus (Mouse)).